Reading from the N-terminus, the 108-residue chain is uncharacterized protein (108 aa).

A compositionally biased stretch (polar residues) spans 1-15 (MSDSNSRLVYSTQTG). Residues 1-29 (MSDSNSRLVYSTQTGRIEEPKTAPVRPKG) form a disordered region. Over residues 16–29 (RIEEPKTAPVRPKG) the composition is skewed to basic and acidic residues.

The protein belongs to the SUI1 family.

This is an uncharacterized protein from Salmonella typhi.